Here is a 205-residue protein sequence, read N- to C-terminus: Small ribosomal subunit protein uS4c (205 aa).

The 64-residue stretch at 93 to 156 (MRLDNTVFRL…KSRNLVLNNL (64 aa)) folds into the S4 RNA-binding domain.

This sequence belongs to the universal ribosomal protein uS4 family. Part of the 30S ribosomal subunit. Contacts protein S5. The interaction surface between S4 and S5 is involved in control of translational fidelity.

It localises to the plastid. The protein localises to the chloroplast. In terms of biological role, one of the primary rRNA binding proteins, it binds directly to 16S rRNA where it nucleates assembly of the body of the 30S subunit. With S5 and S12 plays an important role in translational accuracy. This is Small ribosomal subunit protein uS4c (rps4) from Mesostigma viride (Green alga).